We begin with the raw amino-acid sequence, 83 residues long: Turripeptide Lol11.1 (83 aa).

An N-terminal signal peptide occupies residues 1–27 (MARQMMTVGCLILIVVLLDMMVPVFNT).

Belongs to the conopeptide I2-like superfamily. In terms of processing, contains 4 disulfide bonds. In terms of tissue distribution, expressed by the venom duct.

The protein localises to the secreted. Functionally, acts as a neurotoxin by inhibiting voltage-gated potassium channels (Kv). The polypeptide is Turripeptide Lol11.1 (Iotyrris olangoensis (Sea snail)).